We begin with the raw amino-acid sequence, 374 residues long: Fatty acid conjugase FAC2 A (374 aa).

2 helical membrane-spanning segments follow: residues 50-70 (IIVTCILFYVASNYIPMLPGF) and 74-94 (IVWPVYWISQGVFLGRLWMIG). Positions 95–99 (HECGH) match the Histidine box-1 motif. Residues 131-135 (HRNHH) carry the Histidine box-2 motif. The next 3 membrane-spanning stretches (helical) occupy residues 168–188 (MGLMITMLCKLTFGYAAYIMF), 219–239 (VLFSDVGICIVLYACYRIVMV), and 246–266 (FYVYGIPWVIMSAILFAATYL). The short motif at 306-310 (HVIHH) is the Histidine box-3 element.

The protein belongs to the fatty acid desaturase type 1 family. Expressed exclusively in the developing seeds. Not detected in leaves or flower buds.

Its subcellular location is the microsome membrane. It catalyses the reaction a (9Z,12Z)-octadecadienoyl-containing glycerolipid + AH2 + O2 = a (8E,10E,12Z)-octadecatrienoyl-containing glycerolipid + A + 2 H2O. Its pathway is lipid metabolism; polyunsaturated fatty acid biosynthesis. Its function is as follows. Fatty acid conjugase converting 18:2(9Z, 12Z) to calendic acid 18:3(8E, 10E, 12Z). Converts alpha-linolenic acid (18:3(9Z, 12Z, 15Z)) into 18:4(8E, 10E, 12Z, 15Z). Also has weak activity on the mono-unsaturates 16:1(9Z) and 18:1(9Z) producing two conjugated double bonds at delta(8) and delta(10) position. This is Fatty acid conjugase FAC2 A from Calendula officinalis (Pot marigold).